Reading from the N-terminus, the 218-residue chain is Small ribosomal subunit protein uS3 (218 aa).

In terms of domain architecture, KH type-2 spans 38 to 106 (VREYINKRLQ…RVHINIVEIK (69 aa)).

It belongs to the universal ribosomal protein uS3 family. As to quaternary structure, part of the 30S ribosomal subunit. Forms a tight complex with proteins S10 and S14.

Its function is as follows. Binds the lower part of the 30S subunit head. Binds mRNA in the 70S ribosome, positioning it for translation. This is Small ribosomal subunit protein uS3 from Geobacillus thermodenitrificans (strain NG80-2).